Here is a 111-residue protein sequence, read N- to C-terminus: Ribonuclease P protein component (111 aa).

The protein belongs to the RnpA family. As to quaternary structure, consists of a catalytic RNA component (M1 or rnpB) and a protein subunit.

The enzyme catalyses Endonucleolytic cleavage of RNA, removing 5'-extranucleotides from tRNA precursor.. In terms of biological role, RNaseP catalyzes the removal of the 5'-leader sequence from pre-tRNA to produce the mature 5'-terminus. It can also cleave other RNA substrates such as 4.5S RNA. The protein component plays an auxiliary but essential role in vivo by binding to the 5'-leader sequence and broadening the substrate specificity of the ribozyme. The chain is Ribonuclease P protein component from Borrelia garinii subsp. bavariensis (strain ATCC BAA-2496 / DSM 23469 / PBi) (Borreliella bavariensis).